A 555-amino-acid chain; its full sequence is Urocanate hydratase (555 aa).

NAD(+) is bound by residues 52-53, Gln130, 176-178, Glu196, Arg201, 242-243, 263-267, 273-274, and Tyr322; these read GG, GMG, NA, QTSAH, and YL. The active site involves Cys410. Gly492 is a binding site for NAD(+).

Belongs to the urocanase family. Requires NAD(+) as cofactor.

Its subcellular location is the cytoplasm. It carries out the reaction 4-imidazolone-5-propanoate = trans-urocanate + H2O. It functions in the pathway amino-acid degradation; L-histidine degradation into L-glutamate; N-formimidoyl-L-glutamate from L-histidine: step 2/3. Catalyzes the conversion of urocanate to 4-imidazolone-5-propionate. This is Urocanate hydratase from Shewanella baltica (strain OS195).